A 166-amino-acid polypeptide reads, in one-letter code: Transmembrane protein 278 (166 aa).

The span at 1-15 (MSDQERETEEDEGGD) shows a compositional bias: acidic residues. The tract at residues 1-28 (MSDQERETEEDEGGDPSDTAPMLPQRLP) is disordered. 3 consecutive transmembrane segments (helical) span residues 39 to 59 (GWASLAARGLGTLLFQGWALA), 65 to 85 (LLLPAAVFLLVLLPAAAVVYL), and 111 to 131 (AAVIVLGFLSLPPLLVLASAA).

It belongs to the TMEM88 family.

It localises to the membrane. The protein is Transmembrane protein 278 (TMEM278) of Bos taurus (Bovine).